We begin with the raw amino-acid sequence, 314 residues long: DNA-directed RNA polymerase subunit alpha (314 aa).

Residues 1–228 (MIEIEKPKIE…EHLNIFVGLT (228 aa)) form an alpha N-terminal domain (alpha-NTD) region. The tract at residues 245-314 (KEKVLEMTIE…ELGLSLRKDD (70 aa)) is alpha C-terminal domain (alpha-CTD).

Belongs to the RNA polymerase alpha chain family. In terms of assembly, homodimer. The RNAP catalytic core consists of 2 alpha, 1 beta, 1 beta' and 1 omega subunit. When a sigma factor is associated with the core the holoenzyme is formed, which can initiate transcription.

It carries out the reaction RNA(n) + a ribonucleoside 5'-triphosphate = RNA(n+1) + diphosphate. In terms of biological role, DNA-dependent RNA polymerase catalyzes the transcription of DNA into RNA using the four ribonucleoside triphosphates as substrates. The sequence is that of DNA-directed RNA polymerase subunit alpha from Geobacillus kaustophilus (strain HTA426).